Reading from the N-terminus, the 353-residue chain is MTAILERRESESLWGRFCNWITSTENRLYIGWFGVLMIPTLLTATSVFIIAFIAAPPVDIDGIREPVSGSLLYGNNIISGAIIPTSAAIGLHFYPIWEAASVDEWLYNGGPYELIVLHFLLGVACYMGREWELSFRLGMRPWIAVAYSAPVAAAAAVFLIYPIGQGSFSDGMPLGISGTFNFMIVFQAEHNILMHPFHMLGVAGVFGGSLFSAMHGSLVTSSLIRETTENESANEGYRFGQEEETYNIVAAHGYFGRLIFQYASFNNSRSLHFFLAAWPVVGIWFTALGISTMAFNLNGFNFNQSVVDSQGRVINTWADIINRANLGMEVMHERNAHNFPLDLAAVEAPSTNG.

The residue at position 2 (threonine 2) is an N-acetylthreonine. Threonine 2 bears the Phosphothreonine mark. The next 3 helical transmembrane spans lie at 29 to 46 (YIGW…TATS), 118 to 133 (HFLL…EWEL), and 142 to 156 (WIAV…AAAA). Residue histidine 118 participates in chlorophyll a binding. Pheophytin a is bound at residue tyrosine 126. Positions 170 and 189 each coordinate [CaMn4O5] cluster. The helical transmembrane segment at 197-218 (FHMLGVAGVFGGSLFSAMHGSL) threads the bilayer. Histidine 198 serves as a coordination point for chlorophyll a. A quinone-binding positions include histidine 215 and 264–265 (SF). A Fe cation-binding site is contributed by histidine 215. Histidine 272 lines the Fe cation pocket. A helical transmembrane segment spans residues 274 to 288 (FLAAWPVVGIWFTAL). 4 residues coordinate [CaMn4O5] cluster: histidine 332, glutamate 333, aspartate 342, and alanine 344. The propeptide occupies 345–353 (AVEAPSTNG).

Belongs to the reaction center PufL/M/PsbA/D family. As to quaternary structure, PSII is composed of 1 copy each of membrane proteins PsbA, PsbB, PsbC, PsbD, PsbE, PsbF, PsbH, PsbI, PsbJ, PsbK, PsbL, PsbM, PsbT, PsbX, PsbY, PsbZ, Psb30/Ycf12, at least 3 peripheral proteins of the oxygen-evolving complex and a large number of cofactors. It forms dimeric complexes. Requires The D1/D2 heterodimer binds P680, chlorophylls that are the primary electron donor of PSII, and subsequent electron acceptors. It shares a non-heme iron and each subunit binds pheophytin, quinone, additional chlorophylls, carotenoids and lipids. D1 provides most of the ligands for the Mn4-Ca-O5 cluster of the oxygen-evolving complex (OEC). There is also a Cl(-1) ion associated with D1 and D2, which is required for oxygen evolution. The PSII complex binds additional chlorophylls, carotenoids and specific lipids. as cofactor. Tyr-161 forms a radical intermediate that is referred to as redox-active TyrZ, YZ or Y-Z. Post-translationally, C-terminally processed by CTPA; processing is essential to allow assembly of the oxygen-evolving complex and thus photosynthetic growth.

It is found in the plastid. Its subcellular location is the chloroplast thylakoid membrane. The enzyme catalyses 2 a plastoquinone + 4 hnu + 2 H2O = 2 a plastoquinol + O2. Photosystem II (PSII) is a light-driven water:plastoquinone oxidoreductase that uses light energy to abstract electrons from H(2)O, generating O(2) and a proton gradient subsequently used for ATP formation. It consists of a core antenna complex that captures photons, and an electron transfer chain that converts photonic excitation into a charge separation. The D1/D2 (PsbA/PsbD) reaction center heterodimer binds P680, the primary electron donor of PSII as well as several subsequent electron acceptors. The chain is Photosystem II protein D1 from Panax ginseng (Korean ginseng).